Consider the following 192-residue polypeptide: Peptidyl-tRNA hydrolase (192 aa).

TRNA is bound at residue Y16. Catalysis depends on H21, which acts as the Proton acceptor. TRNA-binding residues include Y66 and N68.

The protein belongs to the PTH family. In terms of assembly, monomer.

It localises to the cytoplasm. The enzyme catalyses an N-acyl-L-alpha-aminoacyl-tRNA + H2O = an N-acyl-L-amino acid + a tRNA + H(+). In terms of biological role, hydrolyzes ribosome-free peptidyl-tRNAs (with 1 or more amino acids incorporated), which drop off the ribosome during protein synthesis, or as a result of ribosome stalling. Catalyzes the release of premature peptidyl moieties from peptidyl-tRNA molecules trapped in stalled 50S ribosomal subunits, and thus maintains levels of free tRNAs and 50S ribosomes. This chain is Peptidyl-tRNA hydrolase, found in Aquifex aeolicus (strain VF5).